We begin with the raw amino-acid sequence, 2455 residues long: Ectopic P granules protein 5 homolog (2455 aa).

The disordered stretch occupies residues methionine 1 to asparagine 42. Serine 44 is subject to Phosphoserine. Residues valine 77–threonine 105 form a disordered region. Residues glutamine 80–alanine 97 show a composition bias toward low complexity. Phosphoserine is present on serine 467.

Belongs to the EPG5 family.

The protein resides in the cytoplasm. The protein localises to the perinuclear region. It is found in the lysosome. Its function is as follows. Involved in autophagy. Plays a role in late steps of autophagy. In Drosophila melanogaster (Fruit fly), this protein is Ectopic P granules protein 5 homolog.